We begin with the raw amino-acid sequence, 596 residues long: Protein kinase C iota type (596 aa).

A compositionally biased stretch (polar residues) spans 1–12; it reads MPTQRDSSTMSH. A disordered region spans residues 1-23; that stretch reads MPTQRDSSTMSHTVAGGGSGDHS. P2 carries the post-translational modification N-acetylproline. Residues 2–28 form a required for interaction with RAB2 region; that stretch reads PTQRDSSTMSHTVAGGGSGDHSHQVRV. The segment at 2–253 is regulatory domain; sequence PTQRDSSTMS…KASSSLGLQD (252 aa). T3 is modified (phosphothreonine). Phosphoserine is present on residues S7 and S8. T9 bears the Phosphothreonine mark. One can recognise a PB1 domain in the interval 25–108; it reads QVRVKAYYRG…SELLIHVFPC (84 aa). Positions 72-91 are interaction with PARD6A; the sequence is DEEGDPCTVSSQLELEEAFR. The short motif at 125–134 is the Pseudosubstrate element; the sequence is YRRGARRWRK. Residues 140–190 form a Phorbol-ester/DAG-type zinc finger; it reads GHTFQAKRFNRRAHCAICTDRIWGLGRQGYKCINCKLLVHKKCHKLVTIEC. A disordered region spans residues 221 to 246; the sequence is PSSHESLDQVGEEKEAMNTRESGKAS. The span at 225 to 243 shows a compositional bias: basic and acidic residues; it reads ESLDQVGEEKEAMNTRESG. The Protein kinase domain maps to 254 to 522; the sequence is FDLLRVIGRG…FADIQGHPFF (269 aa). Residue 260–268 coordinates ATP; sequence IGRGSYAKV. Phosphotyrosine; by SRC is present on residues Y265 and Y280. Residue K283 coordinates ATP. Y334 carries the phosphotyrosine; by SRC modification. Catalysis depends on D378, which acts as the Proton acceptor. A Phosphothreonine; by PDPK1 modification is found at T412. In terms of domain architecture, AGC-kinase C-terminal spans 523-594; sequence RNVDWDMMEQ…INPLLMSAEE (72 aa). The residue at position 564 (T564) is a Phosphothreonine.

It belongs to the protein kinase superfamily. AGC Ser/Thr protein kinase family. PKC subfamily. As to quaternary structure, forms a complex with SQSTM1 and MP2K5. Interacts directly with SQSTM1. Interacts with IKBKB. Interacts with PARD6A, PARD6B and PARD6G. Part of a quaternary complex containing aPKC, PARD3, a PARD6 protein (PARD6A, PARD6B or PARD6G) and a GTPase protein (CDC42 or RAC1). Part of a complex with LLGL1 and PARD6B. Interacts with ADAP1/CENTA1. Interaction with SMG1, through the ZN-finger domain, activates the kinase activity. Interacts with CDK7. Forms a complex with RAB2A and GAPDH involved in recruitment onto the membrane of vesicular tubular clusters (VTCs). Interacts with ECT2 ('Thr-359' phosphorylated form). Interacts with VAMP2. Interacts with WDFY2 (via WD repeats 1-3). Phosphorylation at Thr-412 in the activation loop is not mandatory for activation. Upon neuronal growth factor (NGF) stimulation, phosphorylated by SRC at Tyr-265, Tyr-280 and Tyr-334. Phosphorylation at Tyr-265 facilitates binding to KPNB1/importin-beta regulating entry of PRKCI into the nucleus. Phosphorylation on Tyr-334 is important for NF-kappa-B stimulation. Phosphorylated at Thr-564 during the initial phase of long term potentiation.

It is found in the cytoplasm. The protein resides in the membrane. Its subcellular location is the endosome. The protein localises to the nucleus. The catalysed reaction is L-seryl-[protein] + ATP = O-phospho-L-seryl-[protein] + ADP + H(+). It catalyses the reaction L-threonyl-[protein] + ATP = O-phospho-L-threonyl-[protein] + ADP + H(+). With respect to regulation, atypical PKCs (PRKCI and PRKCZ) exhibit an elevated basal enzymatic activity (that may be due to the interaction with SMG1 or SQSTM1) and are not regulated by diacylglycerol, phosphatidylserine, phorbol esters or calcium ions. Two specific sites, Thr-412 (activation loop of the kinase domain) and Thr-564 (turn motif), need to be phosphorylated for its full activation. Might also be a target for novel lipid activators that are elevated during nutrient-stimulated insulin secretion. Functionally, calcium- and diacylglycerol-independent serine/ threonine-protein kinase that plays a general protective role against apoptotic stimuli, is involved in NF-kappa-B activation, cell survival, differentiation and polarity, and contributes to the regulation of microtubule dynamics in the early secretory pathway. Is necessary for BCR-ABL oncogene-mediated resistance to apoptotic drug in leukemia cells, protecting leukemia cells against drug-induced apoptosis. In cultured neurons, prevents amyloid beta protein-induced apoptosis by interrupting cell death process at a very early step. In glioblastoma cells, may function downstream of phosphatidylinositol 3-kinase (PI(3)K) and PDPK1 in the promotion of cell survival by phosphorylating and inhibiting the pro-apoptotic factor BAD. Can form a protein complex in non-small cell lung cancer (NSCLC) cells with PARD6A and ECT2 and regulate ECT2 oncogenic activity by phosphorylation, which in turn promotes transformed growth and invasion. In response to nerve growth factor (NGF), acts downstream of SRC to phosphorylate and activate IRAK1, allowing the subsequent activation of NF-kappa-B and neuronal cell survival. Functions in the organization of the apical domain in epithelial cells by phosphorylating EZR. This step is crucial for activation and normal distribution of EZR at the early stages of intestinal epithelial cell differentiation. Forms a protein complex with LLGL1 and PARD6B independently of PARD3 to regulate epithelial cell polarity. Plays a role in microtubule dynamics in the early secretory pathway through interaction with RAB2A and GAPDH and recruitment to vesicular tubular clusters (VTCs). In human coronary artery endothelial cells (HCAEC), is activated by saturated fatty acids and mediates lipid-induced apoptosis. Involved in early synaptic long term potentiation phase in CA1 hippocampal cells and short term memory formation. This chain is Protein kinase C iota type (PRKCI), found in Pongo abelii (Sumatran orangutan).